The following is a 343-amino-acid chain: Uroporphyrinogen decarboxylase (343 aa).

Residues 23–27 (RQAGR), Asp73, Tyr150, Ser205, and His322 each bind substrate.

Belongs to the uroporphyrinogen decarboxylase family. In terms of assembly, homodimer.

The protein resides in the cytoplasm. It carries out the reaction uroporphyrinogen III + 4 H(+) = coproporphyrinogen III + 4 CO2. It functions in the pathway porphyrin-containing compound metabolism; protoporphyrin-IX biosynthesis; coproporphyrinogen-III from 5-aminolevulinate: step 4/4. Catalyzes the decarboxylation of four acetate groups of uroporphyrinogen-III to yield coproporphyrinogen-III. The protein is Uroporphyrinogen decarboxylase of Cereibacter sphaeroides (strain ATCC 17025 / ATH 2.4.3) (Rhodobacter sphaeroides).